Consider the following 662-residue polypeptide: MQLDDDLEFAKKIFNPNRAFAKQARIKNMCEYKDLVHEANENYENFWGELAKQKLTWFKPFDKVLNSDNAPFFKWFENGKINVSYNCIDRHLKDKKNKVAIIFEGEMGDYNAITYRKLHSEVNKTANLLKNEFNIKKGDRVIIYMPMIAESVYMMLACTRIGAIHSIVFAGFSPEALRDRINDAQAKLVITADGTFRKGKPYMLKPALDKALANNTCPSVEKTLIVIRNAKEIDYVRGRDFVYNEMVNYQSDKCEPEMMDSEDPLFLLYTSGSTGKPKGVQHSSAGYLLWAQMTMEWVFDIRDNDNFWCTADIGWITGHTYVVYGPLACGATTLILEGTMSYPDYGRWWRMIEEYRVDKFYTSPTAIRMLHAKGENEPSKYNLDSLKVLGTVGEPINPTAWKWFYEKIGNSQCSIVDTWWQTETGGHIISPLPGATPIRASCATLPLPGIHAEVLNEDGSKTKPGEQGFLCITKPWPSMIRNIWGDEKRYIDSYFSQIQLNGEYVYLSGDGAIVDENGYITIIGRTDDIVNVSGHRIGTAEVESAISKHEMVVECAVVGIPDTIKGEGLFAFVVLCDGAKCNLGESLELLKEMNHILAVEIGKIAKLDNVMYVPGLPKTRSGKIMRRILKSIVKKEPITQDLSTLEDVNVVKEIINIAQMEE.

Residues 197 to 200 (RKGK) and T317 each bind CoA. Residues 393 to 395 (GEP), 417 to 422 (DTWWQT), D510, and R525 contribute to the ATP site. S533 is a CoA binding site. R536 contributes to the ATP binding site. 2 residues coordinate Mg(2+): H549 and V552. K623 carries the N6-acetyllysine modification.

This sequence belongs to the ATP-dependent AMP-binding enzyme family. The cofactor is Mg(2+). Post-translationally, acetylated. Deacetylation by the SIR2-homolog deacetylase activates the enzyme.

It carries out the reaction acetate + ATP + CoA = acetyl-CoA + AMP + diphosphate. Functionally, catalyzes the conversion of acetate into acetyl-CoA (AcCoA), an essential intermediate at the junction of anabolic and catabolic pathways. AcsA undergoes a two-step reaction. In the first half reaction, AcsA combines acetate with ATP to form acetyl-adenylate (AcAMP) intermediate. In the second half reaction, it can then transfer the acetyl group from AcAMP to the sulfhydryl group of CoA, forming the product AcCoA. The chain is Acetyl-coenzyme A synthetase from Helicobacter acinonychis (strain Sheeba).